The primary structure comprises 594 residues: DNA ligase (594 aa).

E256 lines the ATP pocket. The N6-AMP-lysine intermediate role is filled by K258. ATP is bound by residues R263, R279, E309, F349, R426, and K432.

It belongs to the ATP-dependent DNA ligase family. Requires Mg(2+) as cofactor.

It carries out the reaction ATP + (deoxyribonucleotide)n-3'-hydroxyl + 5'-phospho-(deoxyribonucleotide)m = (deoxyribonucleotide)n+m + AMP + diphosphate.. Functionally, DNA ligase that seals nicks in double-stranded DNA during DNA replication, DNA recombination and DNA repair. The polypeptide is DNA ligase (Ignicoccus hospitalis (strain KIN4/I / DSM 18386 / JCM 14125)).